The following is a 92-amino-acid chain: Acylphosphatase (92 aa).

One can recognise an Acylphosphatase-like domain in the interval 5–92; the sequence is GVTIYVYGRV…EDIADFIVRH (88 aa). Catalysis depends on residues Arg-20 and Asn-38.

This sequence belongs to the acylphosphatase family.

It catalyses the reaction an acyl phosphate + H2O = a carboxylate + phosphate + H(+). The polypeptide is Acylphosphatase (acyP) (Photorhabdus laumondii subsp. laumondii (strain DSM 15139 / CIP 105565 / TT01) (Photorhabdus luminescens subsp. laumondii)).